Reading from the N-terminus, the 247-residue chain is E3 SUMO-protein ligase NSE2 (247 aa).

The residue at position 1 (Met1) is an N-acetylmethionine. Residues Lys90 and Lys107 each participate in a glycyl lysine isopeptide (Lys-Gly) (interchain with G-Cter in SUMO2) cross-link. Ser116 is subject to Phosphoserine. Glycyl lysine isopeptide (Lys-Gly) (interchain with G-Cter in SUMO2) cross-links involve residues Lys125 and Lys130. The SP-RING-type zinc-finger motif lies at 154 to 240 (VDEDIIVTQS…LRRAIENHNK (87 aa)). Residues Cys185, His187, Cys210, and Cys215 each contribute to the Zn(2+) site.

This sequence belongs to the NSE2 family. Component of the SMC5-SMC6 complex which consists at least of SMC5, SMC6, NSMCE2, NSMCE1, NSMCE4A or EID3 and NSMCE3. Sumoylated, possibly via autosumoylation.

Its subcellular location is the nucleus. It localises to the chromosome. The protein resides in the telomere. It is found in the PML body. Its pathway is protein modification; protein sumoylation. Functionally, E3 SUMO-protein ligase component of the SMC5-SMC6 complex, a complex involved in DNA double-strand break repair by homologous recombination. Is not be required for the stability of the complex. The complex may promote sister chromatid homologous recombination by recruiting the SMC1-SMC3 cohesin complex to double-strand breaks. The complex is required for telomere maintenance via recombination in ALT (alternative lengthening of telomeres) cell lines and mediates sumoylation of shelterin complex (telosome) components which is proposed to lead to shelterin complex disassembly in ALT-associated PML bodies (APBs). Acts as an E3 ligase mediating SUMO attachment to various proteins such as SMC6L1 and TSNAX, the shelterin complex subunits TERF1, TERF2, TINF2 and TERF2IP, RAD51AP1, and maybe the cohesin components RAD21 and STAG2. Required for recruitment of telomeres to PML nuclear bodies. SUMO protein-ligase activity is required for the prevention of DNA damage-induced apoptosis by facilitating DNA repair, and for formation of APBs in ALT cell lines. Required for sister chromatid cohesion during prometaphase and mitotic progression. This Homo sapiens (Human) protein is E3 SUMO-protein ligase NSE2 (NSMCE2).